Consider the following 140-residue polypeptide: Ribosome maturation factor RimP (140 aa).

The protein belongs to the RimP family.

The protein localises to the cytoplasm. In terms of biological role, required for maturation of 30S ribosomal subunits. The chain is Ribosome maturation factor RimP from Campylobacter hominis (strain ATCC BAA-381 / DSM 21671 / CCUG 45161 / LMG 19568 / NCTC 13146 / CH001A).